The primary structure comprises 78 residues: Translational regulator CsrA (78 aa).

This sequence belongs to the CsrA/RsmA family. As to quaternary structure, homodimer; the beta-strands of each monomer intercalate to form a hydrophobic core, while the alpha-helices form wings that extend away from the core.

The protein resides in the cytoplasm. Functionally, a translational regulator that binds mRNA to regulate translation initiation and/or mRNA stability. Usually binds in the 5'-UTR at or near the Shine-Dalgarno sequence preventing ribosome-binding, thus repressing translation. Its main target seems to be the major flagellin gene, while its function is anatagonized by FliW. This chain is Translational regulator CsrA, found in Caldicellulosiruptor bescii (strain ATCC BAA-1888 / DSM 6725 / KCTC 15123 / Z-1320) (Anaerocellum thermophilum).